A 280-amino-acid polypeptide reads, in one-letter code: Exfoliative toxin A (280 aa).

Residues 1-38 (MNNSKIISKVLLSLSLFTVGASAFVIQDELMQKNHAKA) form the signal peptide. Active-site charge relay system residues include histidine 110, aspartate 158, and serine 233.

Belongs to the peptidase S1B family. Ca(2+) serves as cofactor.

Functionally, has serine protease-like properties and binds to the skin protein profilaggrin. Cleaves substrates after acidic residues. Exfoliative toxins cause impetigous diseases commonly referred as staphylococcal scalded skin syndrome (SSSS). The polypeptide is Exfoliative toxin A (eta) (Staphylococcus aureus).